Consider the following 271-residue polypeptide: 4-diphosphocytidyl-2-C-methyl-D-erythritol kinase (271 aa).

Residue lysine 17 is part of the active site. Residue 97-107 coordinates ATP; the sequence is PVGSGLGGGSS. The active site involves aspartate 137.

The protein belongs to the GHMP kinase family. IspE subfamily.

It carries out the reaction 4-CDP-2-C-methyl-D-erythritol + ATP = 4-CDP-2-C-methyl-D-erythritol 2-phosphate + ADP + H(+). Its pathway is isoprenoid biosynthesis; isopentenyl diphosphate biosynthesis via DXP pathway; isopentenyl diphosphate from 1-deoxy-D-xylulose 5-phosphate: step 3/6. In terms of biological role, catalyzes the phosphorylation of the position 2 hydroxy group of 4-diphosphocytidyl-2C-methyl-D-erythritol. In Thermotoga petrophila (strain ATCC BAA-488 / DSM 13995 / JCM 10881 / RKU-1), this protein is 4-diphosphocytidyl-2-C-methyl-D-erythritol kinase.